The sequence spans 385 residues: S-adenosylmethionine synthase (385 aa).

Residue His16 coordinates ATP. Asp18 lines the Mg(2+) pocket. Glu44 serves as a coordination point for K(+). Positions 57 and 100 each coordinate L-methionine. The interval 100-110 (QSPDINQGVDR) is flexible loop. ATP contacts are provided by residues 164–166 (DGK), 230–231 (KF), Asp239, 245–246 (RK), Ala262, and Lys266. Residue Asp239 participates in L-methionine binding. Lys270 serves as a coordination point for L-methionine.

It belongs to the AdoMet synthase family. Homotetramer; dimer of dimers. Requires Mg(2+) as cofactor. It depends on K(+) as a cofactor.

It is found in the cytoplasm. The catalysed reaction is L-methionine + ATP + H2O = S-adenosyl-L-methionine + phosphate + diphosphate. It functions in the pathway amino-acid biosynthesis; S-adenosyl-L-methionine biosynthesis; S-adenosyl-L-methionine from L-methionine: step 1/1. Its function is as follows. Catalyzes the formation of S-adenosylmethionine (AdoMet) from methionine and ATP. The overall synthetic reaction is composed of two sequential steps, AdoMet formation and the subsequent tripolyphosphate hydrolysis which occurs prior to release of AdoMet from the enzyme. This Helicobacter pylori (strain ATCC 700392 / 26695) (Campylobacter pylori) protein is S-adenosylmethionine synthase.